Consider the following 360-residue polypeptide: Phospho-N-acetylmuramoyl-pentapeptide-transferase (360 aa).

Transmembrane regions (helical) follow at residues 3–23 (SILV…PYLI), 52–72 (MGGV…HLTV), 81–101 (GLLV…DDFI), 115–135 (AKLV…MQFA), 153–173 (ITVI…AISG), 187–207 (LAGG…FWQF), 230–250 (IALV…WNAA), 254–274 (IFMG…LSMV), 282–302 (IIIG…IVVF), and 333–353 (FWVL…ADWL).

It belongs to the glycosyltransferase 4 family. MraY subfamily. Mg(2+) serves as cofactor.

The protein localises to the cell membrane. The catalysed reaction is UDP-N-acetyl-alpha-D-muramoyl-L-alanyl-gamma-D-glutamyl-meso-2,6-diaminopimeloyl-D-alanyl-D-alanine + di-trans,octa-cis-undecaprenyl phosphate = di-trans,octa-cis-undecaprenyl diphospho-N-acetyl-alpha-D-muramoyl-L-alanyl-D-glutamyl-meso-2,6-diaminopimeloyl-D-alanyl-D-alanine + UMP. Its pathway is cell wall biogenesis; peptidoglycan biosynthesis. In terms of biological role, catalyzes the initial step of the lipid cycle reactions in the biosynthesis of the cell wall peptidoglycan: transfers peptidoglycan precursor phospho-MurNAc-pentapeptide from UDP-MurNAc-pentapeptide onto the lipid carrier undecaprenyl phosphate, yielding undecaprenyl-pyrophosphoryl-MurNAc-pentapeptide, known as lipid I. The protein is Phospho-N-acetylmuramoyl-pentapeptide-transferase of Saccharopolyspora erythraea (strain ATCC 11635 / DSM 40517 / JCM 4748 / NBRC 13426 / NCIMB 8594 / NRRL 2338).